We begin with the raw amino-acid sequence, 147 residues long: Large ribosomal subunit protein bL9 (147 aa).

The protein belongs to the bacterial ribosomal protein bL9 family.

Binds to the 23S rRNA. This chain is Large ribosomal subunit protein bL9, found in Natranaerobius thermophilus (strain ATCC BAA-1301 / DSM 18059 / JW/NM-WN-LF).